The chain runs to 616 residues: Telomeric repeat-binding factor 2-interacting protein 1 (616 aa).

The region spanning 15–98 (FLDPGGQSMR…QQLDPNDYAI (84 aa)) is the BRCT domain. Residues 112–169 (NQGSGRLGYSSEEDAAILKFIEKRQQDAKGNLVWKEMEKRHVTEHSWQSMKDRFLKHL) form the Myb-like domain. A disordered region spans residues 174-518 (ADKPTKKSPI…CSHIRETPEE (345 aa)). The segment covering 232 to 245 (PERASSPPEEPQAA) has biased composition (low complexity). The span at 246-255 (GQPSQASSND) shows a compositional bias: polar residues. 2 stretches are compositionally biased toward basic and acidic residues: residues 271-288 (ENPRLDEDAPDASNEHSS) and 344-358 (RSSRLEENPDRRDIP). 2 stretches are compositionally biased toward polar residues: residues 363–382 (EQSSPNKSQMTSKISTSDSG) and 397–415 (NANSSPSKTRQTNSEASTP). A compositionally biased stretch (acidic residues) spans 431 to 444 (EDSDVMDDSEECEN). A compositionally biased stretch (basic and acidic residues) spans 468–480 (REPESQAEHHEET). The short motif at 597-613 (SKFGEEEVTRRKSFLAT) is the Nuclear localization signal element.

Belongs to the RAP1 family. Homodimer. Component of the shelterin complex (telosome). Interacts with terf2; the interaction is direct.

The protein localises to the nucleus. It is found in the chromosome. It localises to the telomere. Its function is as follows. Acts both as a regulator of telomere function and as a transcription regulator. Involved in the regulation of telomere length and protection as a component of the shelterin complex (telosome). Does not bind DNA directly: recruited to telomeric double-stranded 5'-TTAGGG-3' repeats via its interaction with terf2. Independently of its function in telomeres, also acts as a transcription regulator: recruited to extratelomeric 5'-TTAGGG-3' sites via its association with terf2 or other factors, and regulates gene expression. This is Telomeric repeat-binding factor 2-interacting protein 1 (terf2ip) from Danio rerio (Zebrafish).